Here is a 228-residue protein sequence, read N- to C-terminus: 2-C-methyl-D-erythritol 4-phosphate cytidylyltransferase (228 aa).

This sequence belongs to the IspD/TarI cytidylyltransferase family. IspD subfamily.

The enzyme catalyses 2-C-methyl-D-erythritol 4-phosphate + CTP + H(+) = 4-CDP-2-C-methyl-D-erythritol + diphosphate. Its pathway is isoprenoid biosynthesis; isopentenyl diphosphate biosynthesis via DXP pathway; isopentenyl diphosphate from 1-deoxy-D-xylulose 5-phosphate: step 2/6. Functionally, catalyzes the formation of 4-diphosphocytidyl-2-C-methyl-D-erythritol from CTP and 2-C-methyl-D-erythritol 4-phosphate (MEP). The chain is 2-C-methyl-D-erythritol 4-phosphate cytidylyltransferase from Actinobacillus pleuropneumoniae serotype 3 (strain JL03).